We begin with the raw amino-acid sequence, 226 residues long: ATP synthase subunit a 1 (226 aa).

The next 5 helical transmembrane spans lie at leucine 20 to threonine 40, tyrosine 78 to isoleucine 98, alanine 113 to valine 133, methionine 174 to leucine 194, and leucine 196 to alanine 216.

The protein belongs to the ATPase A chain family. In terms of assembly, F-type ATPases have 2 components, CF(1) - the catalytic core - and CF(0) - the membrane proton channel. CF(1) has five subunits: alpha(3), beta(3), gamma(1), delta(1), epsilon(1). CF(0) has four main subunits: a, b, b' and c.

It localises to the cell inner membrane. Its function is as follows. Key component of the proton channel; it plays a direct role in the translocation of protons across the membrane. In Chlorobaculum parvum (strain DSM 263 / NCIMB 8327) (Chlorobium vibrioforme subsp. thiosulfatophilum), this protein is ATP synthase subunit a 1.